Here is a 192-residue protein sequence, read N- to C-terminus: 7-methyl-GTP pyrophosphatase (192 aa).

The Proton acceptor role is filled by aspartate 69.

It belongs to the Maf family. YceF subfamily. It depends on a divalent metal cation as a cofactor.

Its subcellular location is the cytoplasm. It catalyses the reaction N(7)-methyl-GTP + H2O = N(7)-methyl-GMP + diphosphate + H(+). Functionally, nucleoside triphosphate pyrophosphatase that hydrolyzes 7-methyl-GTP (m(7)GTP). May have a dual role in cell division arrest and in preventing the incorporation of modified nucleotides into cellular nucleic acids. This Pseudomonas putida (strain ATCC 47054 / DSM 6125 / CFBP 8728 / NCIMB 11950 / KT2440) protein is 7-methyl-GTP pyrophosphatase (maf-2).